The chain runs to 119 residues: Auxin-responsive protein SAUR78 (119 aa).

The protein belongs to the ARG7 family.

May be involved in the regulation of ethylene receptor signaling. Promotes cell expansion and plant growth. This is Auxin-responsive protein SAUR78 from Arabidopsis thaliana (Mouse-ear cress).